Reading from the N-terminus, the 490-residue chain is Lignostilbene-alpha,beta-dioxygenase isozyme III (490 aa).

Fe cation-binding residues include His167, His218, His285, and His477.

Belongs to the carotenoid oxygenase family. In terms of assembly, homodimer of two beta subunits. The cofactor is Fe(2+).

The enzyme catalyses 1,2-bis(4-hydroxy-3-methoxyphenyl)ethylene + O2 = 2 vanillin. With respect to regulation, activity is high with beta-5 type stilbene and minimal with beta-1 type stilbene. A 4-hydroxyl group and trans-stilbene structure is essential for the binding of substrates to the enzyme. Catalyzes the cleavage of the interphenyl double bond (C alpha-C beta) of lignin-derived polyphenolic diaryl-propane type compounds (Stilbene). The protein is Lignostilbene-alpha,beta-dioxygenase isozyme III of Sphingomonas paucimobilis (Pseudomonas paucimobilis).